A 264-amino-acid chain; its full sequence is Thymidylate synthase (264 aa).

Arg-21 lines the dUMP pocket. His-51 provides a ligand contact to (6R)-5,10-methylene-5,6,7,8-tetrahydrofolate. 126–127 is a binding site for dUMP; sequence RR. Cys-146 serves as the catalytic Nucleophile. DUMP-binding positions include 166–169, Asn-177, and 207–209; these read RSCD and HLY. (6R)-5,10-methylene-5,6,7,8-tetrahydrofolate is bound at residue Asp-169. Ala-263 serves as a coordination point for (6R)-5,10-methylene-5,6,7,8-tetrahydrofolate.

Belongs to the thymidylate synthase family. Bacterial-type ThyA subfamily. As to quaternary structure, homodimer.

Its subcellular location is the cytoplasm. The catalysed reaction is dUMP + (6R)-5,10-methylene-5,6,7,8-tetrahydrofolate = 7,8-dihydrofolate + dTMP. The protein operates within pyrimidine metabolism; dTTP biosynthesis. Functionally, catalyzes the reductive methylation of 2'-deoxyuridine-5'-monophosphate (dUMP) to 2'-deoxythymidine-5'-monophosphate (dTMP) while utilizing 5,10-methylenetetrahydrofolate (mTHF) as the methyl donor and reductant in the reaction, yielding dihydrofolate (DHF) as a by-product. This enzymatic reaction provides an intracellular de novo source of dTMP, an essential precursor for DNA biosynthesis. The protein is Thymidylate synthase of Salmonella arizonae (strain ATCC BAA-731 / CDC346-86 / RSK2980).